Consider the following 333-residue polypeptide: MPLGLGRRKKAPPLVENEEAEPGRGGLGVGEPGPLGGGGSGGPQMGLPPPPPALRPRLVFHTQLAHGSPTGRIEGFTNVKELYGKIAEAFRLPTAEVMFCTLNTHKVDMDKLLGGQIGLEDFIFAHVKGQRKEVEVFKSEDALGLTITDNGAGYAFIKRIKEGSVIDHIHLISVGDMIEAINGQSLLGCRHYEVARLLKELPRGRTFTLKLTEPRKAFDMISQRSAGGRPGSGPQLGTGRGTLRLRSRGPATVEDLPSAFEEKAIEKVDDLLESYMGIRDTELAATMVELGKDKRNPDELAEALDERLGDFAFPDEFVFDVWGAIGDAKVGRY.

Over residues 1-11 (MPLGLGRRKKA) the composition is skewed to basic residues. The tract at residues 1 to 54 (MPLGLGRRKKAPPLVENEEAEPGRGGLGVGEPGPLGGGGSGGPQMGLPPPPPAL) is disordered. A compositionally biased stretch (gly residues) spans 23–44 (GRGGLGVGEPGPLGGGGSGGPQ). A Phosphoserine modification is found at S68. Residues 133-213 (EVEVFKSEDA…GRTFTLKLTE (81 aa)) form the PDZ domain. 3 positions are modified to phosphoserine: S222, S225, and S232. The disordered stretch occupies residues 223–244 (QRSAGGRPGSGPQLGTGRGTLR). A compositionally biased stretch (gly residues) spans 228–240 (GRPGSGPQLGTGR). At T242 the chain carries Phosphothreonine. S247 is subject to Phosphoserine.

Belongs to the GIPC family. Interacts with GLUT1 (C-terminus), ACTN1, KIF1B, MYO6, PLEKHG5, SDC4/syndecan-4 and SEMA4C/semaphorin-4C. Interacts with RGS19 C-terminus. Interacts with HTLV-I Tax through the PDZ domain. Widely expressed. Expressed in skeletal muscle (at protein level).

Its subcellular location is the cytoplasm. The protein resides in the membrane. In terms of biological role, may be involved in G protein-linked signaling. This chain is PDZ domain-containing protein GIPC1 (GIPC1), found in Homo sapiens (Human).